The chain runs to 294 residues: Proteasome subunit beta (294 aa).

The propeptide at 1–65 (MTADRPALRT…MESGDLAPHG (65 aa)) is removed in mature form; by autocatalysis. Thr66 (nucleophile) is an active-site residue.

Belongs to the peptidase T1B family. As to quaternary structure, the 20S proteasome core is composed of 14 alpha and 14 beta subunits that assemble into four stacked heptameric rings, resulting in a barrel-shaped structure. The two inner rings, each composed of seven catalytic beta subunits, are sandwiched by two outer rings, each composed of seven alpha subunits. The catalytic chamber with the active sites is on the inside of the barrel. Has a gated structure, the ends of the cylinder being occluded by the N-termini of the alpha-subunits. Is capped by the proteasome-associated ATPase, ARC.

It localises to the cytoplasm. It carries out the reaction Cleavage of peptide bonds with very broad specificity.. It participates in protein degradation; proteasomal Pup-dependent pathway. The formation of the proteasomal ATPase ARC-20S proteasome complex, likely via the docking of the C-termini of ARC into the intersubunit pockets in the alpha-rings, may trigger opening of the gate for substrate entry. Interconversion between the open-gate and close-gate conformations leads to a dynamic regulation of the 20S proteasome proteolysis activity. Component of the proteasome core, a large protease complex with broad specificity involved in protein degradation. In Rhodococcus jostii (strain RHA1), this protein is Proteasome subunit beta.